A 428-amino-acid polypeptide reads, in one-letter code: 3-phosphoshikimate 1-carboxyvinyltransferase (428 aa).

3-phosphoshikimate contacts are provided by K22, S23, and R27. Residue K22 participates in phosphoenolpyruvate binding. Residues G96 and R124 each contribute to the phosphoenolpyruvate site. Residues S169, S170, Q171, S197, D313, N336, and K340 each contribute to the 3-phosphoshikimate site. Residue Q171 participates in phosphoenolpyruvate binding. D313 serves as the catalytic Proton acceptor. Phosphoenolpyruvate contacts are provided by R344, R386, and K411.

Belongs to the EPSP synthase family. Monomer.

The protein resides in the cytoplasm. It catalyses the reaction 3-phosphoshikimate + phosphoenolpyruvate = 5-O-(1-carboxyvinyl)-3-phosphoshikimate + phosphate. It functions in the pathway metabolic intermediate biosynthesis; chorismate biosynthesis; chorismate from D-erythrose 4-phosphate and phosphoenolpyruvate: step 6/7. Catalyzes the transfer of the enolpyruvyl moiety of phosphoenolpyruvate (PEP) to the 5-hydroxyl of shikimate-3-phosphate (S3P) to produce enolpyruvyl shikimate-3-phosphate and inorganic phosphate. The sequence is that of 3-phosphoshikimate 1-carboxyvinyltransferase from Photorhabdus laumondii subsp. laumondii (strain DSM 15139 / CIP 105565 / TT01) (Photorhabdus luminescens subsp. laumondii).